We begin with the raw amino-acid sequence, 126 residues long: Nascent polypeptide-associated complex protein (126 aa).

The NAC-A/B domain maps to Pro-10 to Lys-77.

This sequence belongs to the NAC-alpha family. As to quaternary structure, homodimer. Interacts with the ribosome. Binds ribosomal RNA.

In terms of biological role, contacts the emerging nascent chain on the ribosome. The protein is Nascent polypeptide-associated complex protein of Methanococcus maripaludis (strain C5 / ATCC BAA-1333).